The following is a 223-amino-acid chain: UPF0758 protein Tgr7_0100 (223 aa).

An MPN domain is found at Ala-102–Leu-223. Residues His-173, His-175, and Asp-186 each coordinate Zn(2+). Positions His-173–Asp-186 match the JAMM motif motif.

It belongs to the UPF0758 family.

In Thioalkalivibrio sulfidiphilus (strain HL-EbGR7), this protein is UPF0758 protein Tgr7_0100.